Here is a 474-residue protein sequence, read N- to C-terminus: MNFKFVAGLEIHVQLNTKTKMFCSCPTEGPDIPNTRVCPVCLGYPGTLPVLNREAVVMAIALGKALHGHINNISRFHRKNYFYPDLPKGYQITQGDVPIIENAYLELSTGKKIPIKRIHLEEDAAKSVHVSSTGRLSGAEETLLDFNRSGIPLIEIVTDPVFESPEEAALFVEELQATLRYLGISNAQMELGQLRCDVNVSVELDGKEGTRVEIKNLNSIRAIRQALSYEYNRHVDAYKRGEIIPQETLAFDEKTNQTPPMRTKQTSEDYRYFPEPDLPPLVLTSDLFEEADKYSGSFLEAYKNALQWIGKESEARTLALNKDQYLMYATFAKEGFDTKLLTRIITIDLPNILSEVGKGWNEINQSYISAILNLQQRGEITAAVAKDLLWQAARDIDPIKYAQEHQLLGKKDLDLEQVISEVLEQNPDAVEKYKKGNVNVVSFLLGQVMKKTKGTADPGETRKLLEERLTKLSE.

This sequence belongs to the GatB/GatE family. GatB subfamily. Heterotrimer of A, B and C subunits.

The catalysed reaction is L-glutamyl-tRNA(Gln) + L-glutamine + ATP + H2O = L-glutaminyl-tRNA(Gln) + L-glutamate + ADP + phosphate + H(+). The enzyme catalyses L-aspartyl-tRNA(Asn) + L-glutamine + ATP + H2O = L-asparaginyl-tRNA(Asn) + L-glutamate + ADP + phosphate + 2 H(+). In terms of biological role, allows the formation of correctly charged Asn-tRNA(Asn) or Gln-tRNA(Gln) through the transamidation of misacylated Asp-tRNA(Asn) or Glu-tRNA(Gln) in organisms which lack either or both of asparaginyl-tRNA or glutaminyl-tRNA synthetases. The reaction takes place in the presence of glutamine and ATP through an activated phospho-Asp-tRNA(Asn) or phospho-Glu-tRNA(Gln). The sequence is that of Aspartyl/glutamyl-tRNA(Asn/Gln) amidotransferase subunit B from Coprothermobacter proteolyticus (strain ATCC 35245 / DSM 5265 / OCM 4 / BT).